A 282-amino-acid chain; its full sequence is Ribosomal RNA small subunit methyltransferase A (282 aa).

Histidine 11, leucine 13, glycine 44, glutamate 65, aspartate 90, and asparagine 106 together coordinate S-adenosyl-L-methionine.

Belongs to the class I-like SAM-binding methyltransferase superfamily. rRNA adenine N(6)-methyltransferase family. RsmA subfamily.

Its subcellular location is the cytoplasm. The enzyme catalyses adenosine(1518)/adenosine(1519) in 16S rRNA + 4 S-adenosyl-L-methionine = N(6)-dimethyladenosine(1518)/N(6)-dimethyladenosine(1519) in 16S rRNA + 4 S-adenosyl-L-homocysteine + 4 H(+). Its function is as follows. Specifically dimethylates two adjacent adenosines (A1518 and A1519) in the loop of a conserved hairpin near the 3'-end of 16S rRNA in the 30S particle. May play a critical role in biogenesis of 30S subunits. This Synechococcus sp. (strain JA-2-3B'a(2-13)) (Cyanobacteria bacterium Yellowstone B-Prime) protein is Ribosomal RNA small subunit methyltransferase A.